We begin with the raw amino-acid sequence, 331 residues long: Phenylalanine--tRNA ligase alpha subunit (331 aa).

Glu-252 is a binding site for Mg(2+).

Belongs to the class-II aminoacyl-tRNA synthetase family. Phe-tRNA synthetase alpha subunit type 1 subfamily. Tetramer of two alpha and two beta subunits. Mg(2+) is required as a cofactor.

Its subcellular location is the cytoplasm. It catalyses the reaction tRNA(Phe) + L-phenylalanine + ATP = L-phenylalanyl-tRNA(Phe) + AMP + diphosphate + H(+). The protein is Phenylalanine--tRNA ligase alpha subunit of Marinomonas sp. (strain MWYL1).